Reading from the N-terminus, the 263-residue chain is Tryptophan 2,3-dioxygenase (263 aa).

Residues phenylalanine 32 to histidine 36, tyrosine 94, and arginine 98 contribute to the substrate site. Histidine 221 lines the heme pocket. Threonine 235 serves as a coordination point for substrate.

It belongs to the tryptophan 2,3-dioxygenase family. In terms of assembly, homotetramer. Heme serves as cofactor.

It catalyses the reaction L-tryptophan + O2 = N-formyl-L-kynurenine. Its pathway is amino-acid degradation; L-tryptophan degradation via kynurenine pathway; L-kynurenine from L-tryptophan: step 1/2. Its function is as follows. Heme-dependent dioxygenase that catalyzes the oxidative cleavage of the L-tryptophan (L-Trp) pyrrole ring and converts L-tryptophan to N-formyl-L-kynurenine. Catalyzes the oxidative cleavage of the indole moiety. The protein is Tryptophan 2,3-dioxygenase of Caulobacter vibrioides (strain ATCC 19089 / CIP 103742 / CB 15) (Caulobacter crescentus).